We begin with the raw amino-acid sequence, 430 residues long: 3-phosphoshikimate 1-carboxyvinyltransferase (430 aa).

Lys-33, Ser-34, and Arg-38 together coordinate 3-phosphoshikimate. Lys-33 contacts phosphoenolpyruvate. Phosphoenolpyruvate contacts are provided by Gly-101 and Arg-129. Residues Ser-172, Ser-173, Gln-174, Ser-201, Glu-319, and His-346 each coordinate 3-phosphoshikimate. Gln-174 contacts phosphoenolpyruvate. Glu-319 functions as the Proton acceptor in the catalytic mechanism. Phosphoenolpyruvate-binding residues include Arg-350, Arg-391, and Lys-416.

The protein belongs to the EPSP synthase family. In terms of assembly, monomer.

It is found in the cytoplasm. The catalysed reaction is 3-phosphoshikimate + phosphoenolpyruvate = 5-O-(1-carboxyvinyl)-3-phosphoshikimate + phosphate. It participates in metabolic intermediate biosynthesis; chorismate biosynthesis; chorismate from D-erythrose 4-phosphate and phosphoenolpyruvate: step 6/7. In terms of biological role, catalyzes the transfer of the enolpyruvyl moiety of phosphoenolpyruvate (PEP) to the 5-hydroxyl of shikimate-3-phosphate (S3P) to produce enolpyruvyl shikimate-3-phosphate and inorganic phosphate. The protein is 3-phosphoshikimate 1-carboxyvinyltransferase of Corynebacterium glutamicum (strain R).